The primary structure comprises 908 residues: Magnesium-transporting ATPase, P-type 1 (908 aa).

Residues 1-20 (MTDMNIENRKLNRPASENDK) show a composition bias toward basic and acidic residues. The tract at residues 1-21 (MTDMNIENRKLNRPASENDKQ) is disordered. Residues 1 to 80 (MTDMNIENRK…QVPPALIQLL (80 aa)) lie on the Cytoplasmic side of the membrane. A helical transmembrane segment spans residues 81–101 (QAFNNPFIYVLMALAGVSFIT). Topologically, residues 102–113 (DYWLPLRRGEET) are extracellular. The helical transmembrane segment at 114–134 (DLTGVLIILTMVSLSGLLRFW) threads the bilayer. Over 135-293 (QEFRTNRAAQ…QTAFDRGVNS (159 aa)) the chain is Cytoplasmic. A helical membrane pass occupies residues 294-314 (VSWLLIRFMLIMVPVVLLING). Over 315–323 (FSKGDWVEA) the chain is Extracellular. Residues 324–341 (SLFALAVAVGLTPEMLPM) traverse the membrane as a helical segment. Mg(2+) is bound at residue Glu337. The Cytoplasmic portion of the chain corresponds to 342-704 (IVSSNLAKGA…IKGRETFGNI (363 aa)). Asp379 functions as the 4-aspartylphosphate intermediate in the catalytic mechanism. Residues Asp650, Asp654, and Asn718 each coordinate Mg(2+). A helical transmembrane segment spans residues 705–724 (IKYLNMTASSNFGNVFSVLV). The Extracellular segment spans residues 725 to 733 (ASAFIPFLP). A helical membrane pass occupies residues 734-753 (MLAIHLLIQNLMYDISQLSL). Asn743 and Asp747 together coordinate Mg(2+). At 754-775 (PWDKMDKEFLRKPRKWDAKNIG) the chain is on the cytoplasmic side. A helical membrane pass occupies residues 776–799 (RFMLWIGPTSSIFDITTFALMWYV). Residues 800-808 (FAANNVEAQ) are Extracellular-facing. Residues 809–827 (ALFQSGWFIEGLLSQTLVV) form a helical membrane-spanning segment. The Cytoplasmic portion of the chain corresponds to 828–840 (HMLRTQKIPFIQS). The helical transmembrane segment at 841–860 (RATLPVLLTTGLIMAIGIYI) threads the bilayer. Residues 861–875 (PFSPLGAMVGLEPLP) are Extracellular-facing. Residues 876 to 895 (LSYFPWLVATLLSYCLVAQG) form a helical membrane-spanning segment. The Cytoplasmic segment spans residues 896–908 (MKRFYIKRFGQWF).

It belongs to the cation transport ATPase (P-type) (TC 3.A.3) family. Type IIIB subfamily.

Its subcellular location is the cell inner membrane. The enzyme catalyses Mg(2+)(out) + ATP + H2O = Mg(2+)(in) + ADP + phosphate + H(+). Mediates magnesium influx to the cytosol. The chain is Magnesium-transporting ATPase, P-type 1 (mgtB) from Salmonella typhimurium (strain LT2 / SGSC1412 / ATCC 700720).